A 162-amino-acid polypeptide reads, in one-letter code: AP-1 complex subunit sigma-1 (162 aa).

The protein belongs to the adaptor complexes small subunit family. Adaptor protein complex 1 (AP-1) is a heterotetramer composed of two large adaptins (gamma-type subunit apl4 and beta-type subunit apl2), a medium adaptin (mu-type subunit apm1) and a small adaptin (sigma-type subunit aps1). AP-1 interacts with clathrin.

The protein localises to the cytoplasm. The protein resides in the nucleus. It localises to the cytoplasmic vesicle. It is found in the clathrin-coated vesicle membrane. Its subcellular location is the endosome. The protein localises to the golgi apparatus. Its function is as follows. Component of the AP-1 complex which links clathrin to receptors in coated vesicles. Clathrin-associated protein complexes are believed to interact with the cytoplasmic tails of membrane proteins, leading to their selection and concentration. The sequence is that of AP-1 complex subunit sigma-1 (vas2) from Schizosaccharomyces pombe (strain 972 / ATCC 24843) (Fission yeast).